We begin with the raw amino-acid sequence, 447 residues long: Interferon-induced protein 44-like (447 aa).

One can recognise a TLDc domain in the interval 1-159 (MKVTARLTWI…PVECEIFRVD (159 aa)).

The protein belongs to the IFI44 family. As to quaternary structure, HA-28 antigen forms a complex with Kb MHC in BALB.B donor cells. Interacts with FKBP5; this interaction modulates IKBKB and IKBKE kinase activities. Expressed on cells of the hematopoietic lineage. Detected in transformed cell lines of the macrophage and B-cell lineage. Expressed in spleen and bone marrow.

It localises to the cytoplasm. Type I interferon-stimulated gene (ISG) that plays a critical role in antiviral and antibacterial activity. During bacterial infection, promotes macrophage differentiation and facilitates inflammatory cytokine secretion. Plays a role in the control of respiratory syncycial virus/RSV infection, reducing the ability of the virus to replicate. Acts as a feedback regulator of IFN responses by negatively regulating IKBKB kinase activity through interaction with FKBP5. In terms of biological role, precursor of the histocompatibility antigen HA-28 in BALB.B mice. More generally, minor histocompatibility antigens refer to immunogenic peptide which, when complexed with MHC, can generate an immune response after recognition by specific T-cells. The peptides are derived from polymorphic intracellular proteins, which are cleaved by normal pathways of antigen processing. The binding of these peptides to MHC molecules and its expression on the cell surface can stimulate T-cell responses and thereby trigger graft rejection or graft-versus-host disease (GVHD). More specifically, HA-28 minor antigen is transcribed in the BALB.B donor but not in host C57BL/6 cells. HA-28 is presented to the donor BALB.B cell surface by Kb MHC. This complex HA-28/Kb MHC elicits cytotoxic T-cell response in C57BL/6 mice immunized with BALB.B spleen cells. It induces C57BL/6 mice cells recognition and lysis by CD8 T-cell from BALB.B mice. This Mus musculus (Mouse) protein is Interferon-induced protein 44-like (Ifi44l).